A 220-amino-acid polypeptide reads, in one-letter code: Deoxyribose-phosphate aldolase (220 aa).

Asp-89 functions as the Proton donor/acceptor in the catalytic mechanism. The active-site Schiff-base intermediate with acetaldehyde is Lys-151. Lys-180 functions as the Proton donor/acceptor in the catalytic mechanism.

The protein belongs to the DeoC/FbaB aldolase family. DeoC type 1 subfamily.

The protein localises to the cytoplasm. It carries out the reaction 2-deoxy-D-ribose 5-phosphate = D-glyceraldehyde 3-phosphate + acetaldehyde. Its pathway is carbohydrate degradation; 2-deoxy-D-ribose 1-phosphate degradation; D-glyceraldehyde 3-phosphate and acetaldehyde from 2-deoxy-alpha-D-ribose 1-phosphate: step 2/2. In terms of biological role, catalyzes a reversible aldol reaction between acetaldehyde and D-glyceraldehyde 3-phosphate to generate 2-deoxy-D-ribose 5-phosphate. This is Deoxyribose-phosphate aldolase from Staphylococcus haemolyticus (strain JCSC1435).